A 140-amino-acid polypeptide reads, in one-letter code: Acyl carrier protein 1, chloroplastic (140 aa).

The transit peptide at 1–56 directs the protein to the chloroplast; that stretch reads MASAAAGASICIKSASFSPLAPGRISSLRSVSLPVSRKSFPSLKSSKSSFALRVSC. The region spanning 60 to 135 is the Carrier domain; sequence PETVAKVCGI…DAADLIEKLM (76 aa). S95 carries the post-translational modification O-(pantetheine 4'-phosphoryl)serine.

It belongs to the acyl carrier protein (ACP) family. In terms of processing, 4'-phosphopantetheine is transferred from CoA to a specific serine of apo-ACP by acpS. This modification is essential for activity because fatty acids are bound in thioester linkage to the sulfhydryl of the prosthetic group.

The protein resides in the plastid. It localises to the chloroplast. Its pathway is lipid metabolism; fatty acid biosynthesis. Its function is as follows. Carrier of the growing fatty acid chain in fatty acid biosynthesis. The sequence is that of Acyl carrier protein 1, chloroplastic (ACL1.1) from Cuphea lanceolata (Cigar flower).